The sequence spans 201 residues: uncharacterized protein (201 aa).

Residues 11–31 (IIILTIMILTIIIFTRTINGL) traverse the membrane as a helical segment.

Its subcellular location is the membrane. This is an uncharacterized protein from Acanthamoeba polyphaga mimivirus (APMV).